The primary structure comprises 901 residues: HTH-type transcriptional regulator MalT (901 aa).

39–46 contributes to the ATP binding site; sequence SPAGYGKT. In terms of domain architecture, HTH luxR-type spans 829-894; the sequence is ELIRTSPLTQ…DAVQHAQQLL (66 aa). Residues 853–872 constitute a DNA-binding region (H-T-H motif); sequence NEQIAGELDVAATTIKTHIR.

It belongs to the MalT family. As to quaternary structure, monomer in solution. Oligomerizes to an active state in the presence of the positive effectors ATP and maltotriose.

With respect to regulation, activated by ATP and maltotriose, which are both required for DNA binding. Functionally, positively regulates the transcription of the maltose regulon whose gene products are responsible for uptake and catabolism of malto-oligosaccharides. Specifically binds to the promoter region of its target genes, recognizing a short DNA motif called the MalT box. In Klebsiella pneumoniae (strain 342), this protein is HTH-type transcriptional regulator MalT.